A 1744-amino-acid polypeptide reads, in one-letter code: Complement C4-A (1744 aa).

An N-terminal signal peptide occupies residues 1–19 (MRLLWGLIWASSFFTLSLQ). Cys-68 and Cys-97 are joined by a disulfide. N-linked (GlcNAc...) asparagine glycosylation occurs at Asn-226. A disulfide bridge links Cys-635 with Cys-669. A propeptide spanning residues 676 to 679 (RKKR) is cleaved from the precursor. Disulfide bonds link Cys-702-Cys-728, Cys-703-Cys-735, and Cys-716-Cys-736. An Anaphylatoxin-like domain is found at 702-736 (CCQDGVTRLPMMRSCEQRAARVQQPDCREPFLSCC). Residue Asn-862 is glycosylated (N-linked (GlcNAc...) asparagine). Phosphoserine; by FAM20C is present on Ser-918. A cross-link (isoglutamyl cysteine thioester (Cys-Gln)) is located at residues 1010–1013 (CGEQ). Thr-1244 carries O-linked (GalNAc...) threonine glycosylation. N-linked (GlcNAc...) (complex) asparagine glycosylation occurs at Asn-1328. Residue Asn-1391 is glycosylated (N-linked (GlcNAc...) asparagine). Sulfotyrosine occurs at positions 1417, 1420, and 1422. The propeptide occupies 1447 to 1453 (RRNRRRR). 5 disulfide bridges follow: Cys-1471/Cys-1535, Cys-1583/Cys-1588, Cys-1595/Cys-1673, Cys-1618/Cys-1742, and Cys-1718/Cys-1727. Residues 1595–1742 (CPRQRRALER…FLQEYGTQGC (148 aa)) enclose the NTR domain.

In terms of assembly, complement circulates in blood as a disulfide-linked trimer of an alpha, beta and gamma chain. As to quaternary structure, complement C4b is composed of complement C4b-A, complement C4 beta and complement C4 gamma chains that are associated via disulfide bonds. Non-enzymatic component of the C3 convertase, also named C4bC2b, composed of the serine protease complement C2b (C2), as well as complement C4b. Non-enzymatic component of the C5 convertase, also named C4bC2bC3b, composed of the serine protease complement C2b (C2), complement C3b, as well as complement C4b. In terms of processing, prior to secretion, the single-chain precursor is enzymatically cleaved by plasminogen (PLG) to yield non-identical chains alpha, beta and gamma. During activation of the complement systems, the alpha chain is cleaved into C4a and C4b by different proteases depending on the complement pathway: C4b stays linked to the beta and gamma chains, while C4a is released in the plasma. The alpha chain is cleaved by C1S to generate C4a and C4b following activation by the classical complement system. The alpha chain is cleaved to generate C4a and C4b by MASP2 following activation by the lectin complement system. The alpha chain is cleaved by GZMK to generate C4a and C4b following activation by the GZMK complement system. Further degradation of C4b by C1 into the inactive fragments C4c and C4d blocks the generation of C3 convertase. The proteolytic cleavages often are incomplete so that many structural forms can be found in plasma. Upon activation, the internal thioester bond reacts with carbohydrate antigens on the target surface to form amide or ester bonds, leading to covalent association with the surface of pathogens. Post-translationally, ser-1236 of complement C4b interacts with complement C3b via a thioester linkage. In terms of processing, N- and O-glycosylated. O-glycosylated with a core 1 or possibly core 8 glycan. In terms of tissue distribution, complement component C4 is expressed at highest levels in the liver, at moderate levels in the adrenal cortex, adrenal medulla, thyroid gland, and the kidney, and at lowest levels in the heart, ovary, small intestine, thymus, pancreas and spleen. The extra-hepatic sites of expression may be important for the local protection and inflammatory response.

The protein localises to the secreted. It is found in the synapse. It localises to the cell projection. The protein resides in the axon. Its subcellular location is the dendrite. The protein localises to the cell surface. With respect to regulation, specifically inhibited by nanobody hC4Nb8, inhibiting the classical complement pathway. Specifically inhibited by NbB5, NbE11 and NbH9 nanobodies, and to a lesser extent by NbH11 and NbE3 nanobodies. Functionally, precursor of non-enzymatic components of the classical, lectin and GZMK complement pathways, which consist in a cascade of proteins that leads to phagocytosis and breakdown of pathogens and signaling that strengthens the adaptive immune system. Non-enzymatic component of C3 and C5 convertases. Generated following cleavage by complement proteases (C1S, MASP2 or GZMK, depending on the complement pathway), it covalently attaches to the surface of pathogens, where it acts as an opsonin that marks the surface of antigens for removal. It then recruits the serine protease complement C2b to form the C3 and C5 convertases, which cleave and activate C3 and C5, respectively, the next components of the complement pathways. Complement C4b-A isotype is responsible for effective binding to form amide bonds with immune aggregates or protein antigens, while complement C4b-B isotype catalyzes the transacylation of the thioester carbonyl group to form ester bonds with carbohydrate antigens. In terms of biological role, putative humoral mediator released following cleavage by complement proteases (C1S, MASP2 or GZMK, depending on the complement pathway). While it is strongly similar to anaphylatoxins, its role is unclear. Was reported to act as a mediator of local inflammatory process; however these effects were probably due to contamination with C3a and/C5a anaphylatoxins in biological assays. The chain is Complement C4-A from Homo sapiens (Human).